A 197-amino-acid chain; its full sequence is MRAATISRKTKETEIAVSVDLDGTGAATVSTGVGFFDHMLEQLARHSLIDISVAATGDLHIDQHHTVEDTGIALGQALRQALGDRAGIARYANALLPMDETLTRAAIDVSGRPFLVFKTEFRRAKIGEFDTELVREFFQAFVMNAGLTVHIETLYGENAHHIAESCFKALARALRLAIEVDPRQKGAIPSTKGSLAG.

Belongs to the imidazoleglycerol-phosphate dehydratase family.

The protein resides in the cytoplasm. It catalyses the reaction D-erythro-1-(imidazol-4-yl)glycerol 3-phosphate = 3-(imidazol-4-yl)-2-oxopropyl phosphate + H2O. It participates in amino-acid biosynthesis; L-histidine biosynthesis; L-histidine from 5-phospho-alpha-D-ribose 1-diphosphate: step 6/9. The chain is Imidazoleglycerol-phosphate dehydratase from Methylocella silvestris (strain DSM 15510 / CIP 108128 / LMG 27833 / NCIMB 13906 / BL2).